The chain runs to 868 residues: MNNVTERYVLDLQEIDESQVAVVGGKGAHLGSLSRIEGIRVPAGFCVTTDAYRRVVAQSPSLDAQLEELSRVSPDDQEAIRTLSAEIRRTVEEIAVPDDLAGAITRALARSGERTAYAVRSSATAEDLPTASFAGQQDTYLNVVGPAAILRHISRCWASLFTERAVTYRRRNGIDDRTVRMAVVVQQMVFPHASGILFTADPVSGNRTVATVDAGFGLGEALVSGLVNPDVFKVRHGEVVARTISAKQREVHALLAGGTREVPIDAQRQQQPALTDAQAVRLVELGRRIEARFGRPQDIEWCLVDDDFHIVQSRPITTLFPVPESADQENHVYVSVGHQQMMTDPMKPLGLSMWQQTAMVRMHEAGGRLFVDVTQRLAAPASRAGLLDLMGRGDPLVRDALETVLDREDFVPSLPDAPPAGPRAGAAPEPVATDPAVVTGLIERSQASLAALRRDVLTKTGPELFDFLPTAFEEHKRVLTDPLNFKAIMAGMEATWWLNDKLEEWLGEKNAADTLTLSAPGNVTSEMGLALLDVADVIRPHPQVVEFLAGVEDDDFLDELAKVPGGTEARDAIEAYLDRYGMRCVGEIDITRPRWSERPGTLVPVILDNVRNFEPGAARRRFEQGLQQARKKEQEVLSRLRALPDGERKADETKGMIDRVRTFIGYREYPKYDIISRYFVYKQALMAEAERLAQAGVLAEKEDVFYLTFEEFHDVVRTRQIDDRLVRQRKDAFRAYQALTPPRVLTSDGEALTGAYRRDDVPDGALIGLPVSTGTVEGRARVILDMAEADLEAGDILVTTFTDPSWSPLFVAVAGLVTEVGGLMTHGAVIAREYGLPAVVGVEQATRRIRDGQRIRVHGTDGYIEILS.

An ATP-binding region spans residues Thr-5 to Thr-317. 8 residues coordinate ATP: Lys-26, Arg-120, Gly-135, Thr-139, Gln-186, Glu-300, Gln-312, and Arg-314. The segment at Asn-330–Ala-755 is rifampicin-binding. A disordered region spans residues Phe-410–Pro-430. The swivel phosphohistidine stretch occupies residues Gly-768–Ile-866. His-826 functions as the Tele-phosphohistidine intermediate in the catalytic mechanism.

This sequence belongs to the rifampicin phosphotransferase family.

It carries out the reaction rifampicin + ATP + H2O = 21-phosphorifampicin + AMP + phosphate + 2 H(+). Functionally, catalyzes the phosphorylation of rifampicin, also known as rifampin (RIF), leading to its inactivation. Confers high level resistance to a variety of clinically used rifamycin antibiotics. Does not show phosphoenolpyruvate (PEP) synthase activity. This Streptomyces sviceus (strain ATCC 29083 / DSM 924 / JCM 4929 / NBRC 13980 / NCIMB 11184 / NRRL 5439 / UC 5370) protein is Rifampicin phosphotransferase.